Consider the following 902-residue polypeptide: Potassium/sodium hyperpolarization-activated cyclic nucleotide-gated channel 1 (902 aa).

The segment at 1–75 (MEGGGKPNSA…PAGSFEDAEG (75 aa)) is disordered. Residues 1–131 (MEGGGKPNSA…WIIHPYSDFR (131 aa)) lie on the Cytoplasmic side of the membrane. A helical transmembrane segment spans residues 132–153 (FYWDLIMLIMMVGNLVIIPVGI). Topologically, residues 154-162 (TFFTEQTTT) are extracellular. Residues 163–183 (PWIIFNVASDTVFLLDLIMNF) form a helical membrane-spanning segment. At 184-204 (RTGTVNEDSSEIILDPKVIKM) the chain is on the cytoplasmic side. A helical transmembrane segment spans residues 205–225 (NYLKSWFVVDFISSIPVDYIF). The Extracellular portion of the chain corresponds to 226 to 249 (LIVEKGMDSEVYKTARALRIVRFT). Residues 250 to 270 (KILSLLRLLRLSRLIRYIHQW) traverse the membrane as a helical; Voltage-sensor segment. Over 271 to 284 (EEIFHMTYDLASAV) the chain is Cytoplasmic. A helical membrane pass occupies residues 285-307 (VRIFNLIGMMLLLCHWDGCLQFL). The Extracellular segment spans residues 308–333 (VPLLQDFPPDCWVSLNEMVNDSWGKQ). Asparagine 327 is a glycosylation site (N-linked (GlcNAc...) asparagine). Positions 334–355 (YSYALFKAMSHMLCIGYGAQAP) form an intramembrane region, pore-forming. Positions 347–351 (CIGYG) match the Selectivity filter motif. Residues 356 to 360 (VSMSD) are Extracellular-facing. The chain crosses the membrane as a helical span at residues 361 to 381 (LWITMLSMIVGATCYAMFVGH). Over 382–902 (ATALIQSLDS…AEKPRFASNL (521 aa)) the chain is Cytoplasmic. Residues glycine 528, glutamate 529, cysteine 531, arginine 538, threonine 539, arginine 579, and arginine 582 each coordinate 3',5'-cyclic AMP. Disordered regions lie at residues 634 to 681 (TALN…QPSA), 713 to 824 (ASQL…VGES), and 858 to 902 (MSSG…ASNL). Composition is skewed to low complexity over residues 639–680 (TSST…PQPS), 720–736 (QQPQPQLQQSQVQQTQP), and 744–769 (QPQQQQQQQQQQQQQQQQQQQQQQPQ). The span at 770-793 (TPGSSTPKNEVHKSTQALHNTNLT) shows a compositional bias: polar residues. Over residues 867–877 (RGVPPAPPPPA) the composition is skewed to pro residues. A compositionally biased stretch (basic and acidic residues) spans 889–902 (KDPDAEKPRFASNL).

This sequence belongs to the potassium channel HCN family. Homotetramer. Heterotetramer with HCN2. The potassium channel is composed of a homo- or heterotetrameric complex of pore-forming subunits. Interacts with KCNE2. Interacts with the SH3 domain of CSK. In terms of tissue distribution, highly expressed in cerebral cortex, cerebellum, throughout the hippocampus, in medial habenula, anterior dorsal nucleus in the thalamus, tenia tecta, several nuclei of the general motor system and in optic nerve layer. Detected in a subset of elongated cells in taste buds.

Its subcellular location is the cell membrane. The catalysed reaction is Na(+)(in) = Na(+)(out). It catalyses the reaction K(+)(in) = K(+)(out). With respect to regulation, activated by cAMP, and at 10-100 times higher concentrations, also by cGMP. cAMP binding promotes tetramerization and formation of an active channel. Compared to other family members, cAMP has less stimulatory effect on HCN1 because part of the molecules already contain bound cAMP and form homotetramers when cAMP levels are low, this inherent tetramerization in HCN1 results in a weaker response to increased cAMP. In terms of biological role, hyperpolarization-activated ion channel that are permeable to sodium and potassium ions. Exhibits weak selectivity for potassium over sodium ions. Contributes to the native pacemaker currents in heart (If) and in neurons (Ih). Participates in cerebellar mechanisms of motor learning. May mediate responses to sour stimuli. This is Potassium/sodium hyperpolarization-activated cyclic nucleotide-gated channel 1 (Hcn1) from Rattus norvegicus (Rat).